A 932-amino-acid chain; its full sequence is Isoleucine--tRNA ligase (932 aa).

The 'HIGH' region signature appears at 57–67; sequence PYANGDIHMGH. Glutamate 556 is a binding site for L-isoleucyl-5'-AMP. The 'KMSKS' region motif lies at 597–601; sequence KMSKS. An ATP-binding site is contributed by lysine 600. Zn(2+) contacts are provided by cysteine 891, cysteine 894, cysteine 911, and cysteine 914.

The protein belongs to the class-I aminoacyl-tRNA synthetase family. IleS type 1 subfamily. In terms of assembly, monomer. Zn(2+) is required as a cofactor.

It is found in the cytoplasm. It carries out the reaction tRNA(Ile) + L-isoleucine + ATP = L-isoleucyl-tRNA(Ile) + AMP + diphosphate. Functionally, catalyzes the attachment of isoleucine to tRNA(Ile). As IleRS can inadvertently accommodate and process structurally similar amino acids such as valine, to avoid such errors it has two additional distinct tRNA(Ile)-dependent editing activities. One activity is designated as 'pretransfer' editing and involves the hydrolysis of activated Val-AMP. The other activity is designated 'posttransfer' editing and involves deacylation of mischarged Val-tRNA(Ile). The chain is Isoleucine--tRNA ligase from Lactiplantibacillus plantarum (strain ATCC BAA-793 / NCIMB 8826 / WCFS1) (Lactobacillus plantarum).